The following is a 315-amino-acid chain: MLGLNHTSMSEFILVGFSAFPHLQLMLFLLFLLMYLFTLLGNLLIMATVWSERSLHTPMYLFLCVLSVSEILYTVAIIPRMLADLLSTQRSIAFLACASQMFFSFSFGFTHSFLLTVMGYDRYVAICHPLRYNVLMSPRGCACLVGCSWAGGSVMGMVVTSAIFQLTFCGSHEIQHFLCHVPPLLKLACGNNVPAVALGVGLVCIMALLGCFLLILLSYAFIVADILKIPSAEGRNKAFSTCASHLIVVIVHYGFASVIYLKPKGPHSQEGDTLMATTYAVLTPFLSPIIFSLRNKELKVAMKRTFLSTLYSSGT.

Topologically, residues 1 to 25 (MLGLNHTSMSEFILVGFSAFPHLQL) are extracellular. Asn-5 carries an N-linked (GlcNAc...) asparagine glycan. Residues 26 to 46 (MLFLLFLLMYLFTLLGNLLIM) traverse the membrane as a helical segment. The Cytoplasmic portion of the chain corresponds to 47 to 54 (ATVWSERS). Residues 55-75 (LHTPMYLFLCVLSVSEILYTV) form a helical membrane-spanning segment. At 76–99 (AIIPRMLADLLSTQRSIAFLACAS) the chain is on the extracellular side. Cys-97 and Cys-189 form a disulfide bridge. The chain crosses the membrane as a helical span at residues 100-120 (QMFFSFSFGFTHSFLLTVMGY). Over 121–139 (DRYVAICHPLRYNVLMSPR) the chain is Cytoplasmic. Residues 140–160 (GCACLVGCSWAGGSVMGMVVT) form a helical membrane-spanning segment. Over 161–197 (SAIFQLTFCGSHEIQHFLCHVPPLLKLACGNNVPAVA) the chain is Extracellular. The chain crosses the membrane as a helical span at residues 198 to 218 (LGVGLVCIMALLGCFLLILLS). The Cytoplasmic segment spans residues 219–238 (YAFIVADILKIPSAEGRNKA). A helical membrane pass occupies residues 239–259 (FSTCASHLIVVIVHYGFASVI). Residues 260–272 (YLKPKGPHSQEGD) are Extracellular-facing. A helical transmembrane segment spans residues 273 to 293 (TLMATTYAVLTPFLSPIIFSL). The Cytoplasmic segment spans residues 294–315 (RNKELKVAMKRTFLSTLYSSGT).

Belongs to the G-protein coupled receptor 1 family.

It localises to the cell membrane. Its function is as follows. Odorant receptor. In Homo sapiens (Human), this protein is Olfactory receptor 10H2 (OR10H2).